The following is a 190-amino-acid chain: Peptidyl-tRNA hydrolase (190 aa).

F14 contributes to the tRNA binding site. The active-site Proton acceptor is H19. M64, N66, and N112 together coordinate tRNA.

Belongs to the PTH family. As to quaternary structure, monomer.

The protein resides in the cytoplasm. The catalysed reaction is an N-acyl-L-alpha-aminoacyl-tRNA + H2O = an N-acyl-L-amino acid + a tRNA + H(+). Its function is as follows. Hydrolyzes ribosome-free peptidyl-tRNAs (with 1 or more amino acids incorporated), which drop off the ribosome during protein synthesis, or as a result of ribosome stalling. In terms of biological role, catalyzes the release of premature peptidyl moieties from peptidyl-tRNA molecules trapped in stalled 50S ribosomal subunits, and thus maintains levels of free tRNAs and 50S ribosomes. The chain is Peptidyl-tRNA hydrolase from Staphylococcus epidermidis (strain ATCC 35984 / DSM 28319 / BCRC 17069 / CCUG 31568 / BM 3577 / RP62A).